Here is a 331-residue protein sequence, read N- to C-terminus: Glycerol-3-phosphate dehydrogenase [NAD(P)+] (331 aa).

NADPH is bound by residues Ser10, Trp11, Arg31, Arg32, and Lys105. Sn-glycerol 3-phosphate-binding residues include Lys105 and Gly135. Position 139 (Ala139) interacts with NADPH. Lys190, Asp243, Ser253, Arg254, and Asn255 together coordinate sn-glycerol 3-phosphate. The active-site Proton acceptor is Lys190. Arg254 serves as a coordination point for NADPH. NADPH is bound by residues Val279 and Glu281.

Belongs to the NAD-dependent glycerol-3-phosphate dehydrogenase family.

Its subcellular location is the cytoplasm. It catalyses the reaction sn-glycerol 3-phosphate + NAD(+) = dihydroxyacetone phosphate + NADH + H(+). The catalysed reaction is sn-glycerol 3-phosphate + NADP(+) = dihydroxyacetone phosphate + NADPH + H(+). It functions in the pathway membrane lipid metabolism; glycerophospholipid metabolism. Its function is as follows. Catalyzes the reduction of the glycolytic intermediate dihydroxyacetone phosphate (DHAP) to sn-glycerol 3-phosphate (G3P), the key precursor for phospholipid synthesis. The protein is Glycerol-3-phosphate dehydrogenase [NAD(P)+] of Corynebacterium diphtheriae (strain ATCC 700971 / NCTC 13129 / Biotype gravis).